Consider the following 239-residue polypeptide: MKKLKLRLTHLWYKLLMKLGLKSDEVYYIGGSEALPPPLSKDEEQVLLMKLPNGDQAARAILIERNLRLVVYIARKFENTGINIEDLISIGTIGLIKAVNTFNPEKKIKLATYASRCIENEILMYLRRNNKIRSEVSFDEPLNIDWDGNELLLSDVLGTDDDIITKDIEANVDKKLLKKALEQLNEREKQIMELRFGLVGEEEKTQKDVADMMGISQSYISRLEKRIIKRLRKEFNKMV.

The propeptide at 1–29 is removed by SpoIIGA; that stretch reads MKKLKLRLTHLWYKLLMKLGLKSDEVYYI. The Polymerase core binding motif lies at 86–99; the sequence is DLISIGTIGLIKAV. The segment at residues 206–225 is a DNA-binding region (H-T-H motif); it reads QKDVADMMGISQSYISRLEK.

The protein belongs to the sigma-70 factor family. In terms of processing, proteolytically cleaved in the N-terminus by SpoIIGA to yield the active peptide.

Functionally, sigma factors are initiation factors that promote the attachment of RNA polymerase to specific initiation sites and are then released. This sigma factor is responsible for the expression of sporulation specific genes. The sequence is that of RNA polymerase sigma-E factor (sigE) from Bacillus subtilis (strain 168).